We begin with the raw amino-acid sequence, 885 residues long: Leucine--tRNA ligase (885 aa).

The short motif at 48 to 58 (PYPSGKLHMGH) is the 'HIGH' region element. The 'KMSKS' region signature appears at 639–643 (TMSKS). An ATP-binding site is contributed by K642.

The protein belongs to the class-I aminoacyl-tRNA synthetase family.

The protein resides in the cytoplasm. It catalyses the reaction tRNA(Leu) + L-leucine + ATP = L-leucyl-tRNA(Leu) + AMP + diphosphate. The sequence is that of Leucine--tRNA ligase from Bordetella avium (strain 197N).